The chain runs to 344 residues: MKVAIIGATGYSGAELFRLLQAHPHVDRCDVYLSSQDGVHLSESFPHVGAVDGAVLHKLDIEALAKYDAVFFATPPGVSGEWAPALVDRGVKVIDLSGDFRLKDGAVYERWYGREAAPAAYLKRAVYGLTEWNRDAVREAELLSNPGCYPTATLLGLAPLVKERLIEEDSIIVDAKSGVSGAGRKAGLGTHFSEVNENVKIYKVNAHQHIPEIEQMLGTWNGAMKPITFSTHLIPMTRGIMSTIYAKVKQPFSLNDLIDLYKTSYEDASFVRIRQPGQFPATKEVYGSNYCDIGLAYDERTGRVTVVSVIDNLMKGAAGQAVQNFNLMMGWDEVEGLCFLPTYP.

Cys-148 is a catalytic residue.

The protein belongs to the NAGSA dehydrogenase family. Type 1 subfamily.

It is found in the cytoplasm. The enzyme catalyses N-acetyl-L-glutamate 5-semialdehyde + phosphate + NADP(+) = N-acetyl-L-glutamyl 5-phosphate + NADPH + H(+). The protein operates within amino-acid biosynthesis; L-arginine biosynthesis; N(2)-acetyl-L-ornithine from L-glutamate: step 3/4. In terms of biological role, catalyzes the NADPH-dependent reduction of N-acetyl-5-glutamyl phosphate to yield N-acetyl-L-glutamate 5-semialdehyde. The chain is N-acetyl-gamma-glutamyl-phosphate reductase from Geobacillus thermodenitrificans (strain NG80-2).